Reading from the N-terminus, the 199-residue chain is Small ribosomal subunit protein uS2 (199 aa).

Belongs to the universal ribosomal protein uS2 family.

The sequence is that of Small ribosomal subunit protein uS2 (rps2) from Thermoplasma acidophilum (strain ATCC 25905 / DSM 1728 / JCM 9062 / NBRC 15155 / AMRC-C165).